Here is a 635-residue protein sequence, read N- to C-terminus: Glycosyltransferase-like protein gnt13 (635 aa).

At 1-18 (MNINTLIINFNKVKRMKN) the chain is on the cytoplasmic side. Residues 19-38 (FLILTLLVVMVVVFLQGPTL) form a helical; Signal-anchor for type II membrane protein membrane-spanning segment. Topologically, residues 39–635 (MINNSGQGMG…PNECFSDHHW (597 aa)) are extracellular. N-linked (GlcNAc...) asparagine glycosylation is found at Asn-41 and Asn-179. 2 disordered regions span residues 300-358 (NINN…NNID) and 389-458 (NIDN…NNEP). The span at 389 to 456 (NIDNNNSNYN…NNNNNNNNNN (68 aa)) shows a compositional bias: low complexity. Asn-393 and Asn-535 each carry an N-linked (GlcNAc...) asparagine glycan.

The protein belongs to the glycosyltransferase 8 family. Highly divergent.

The protein resides in the membrane. The protein is Glycosyltransferase-like protein gnt13 (gnt13) of Dictyostelium discoideum (Social amoeba).